The primary structure comprises 362 residues: tRNA/tmRNA (uracil-C(5))-methyltransferase (362 aa).

The S-adenosyl-L-methionine site is built by glutamine 182, tyrosine 210, asparagine 215, glutamate 231, and aspartate 293. The Nucleophile role is filled by cysteine 318. Catalysis depends on glutamate 352, which acts as the Proton acceptor.

This sequence belongs to the class I-like SAM-binding methyltransferase superfamily. RNA M5U methyltransferase family. TrmA subfamily.

It carries out the reaction uridine(54) in tRNA + S-adenosyl-L-methionine = 5-methyluridine(54) in tRNA + S-adenosyl-L-homocysteine + H(+). It catalyses the reaction uridine(341) in tmRNA + S-adenosyl-L-methionine = 5-methyluridine(341) in tmRNA + S-adenosyl-L-homocysteine + H(+). Its function is as follows. Dual-specificity methyltransferase that catalyzes the formation of 5-methyluridine at position 54 (m5U54) in all tRNAs, and that of position 341 (m5U341) in tmRNA (transfer-mRNA). The protein is tRNA/tmRNA (uracil-C(5))-methyltransferase of Neisseria meningitidis serogroup B (strain ATCC BAA-335 / MC58).